A 139-amino-acid polypeptide reads, in one-letter code: Putative pre-16S rRNA nuclease (139 aa).

This sequence belongs to the YqgF nuclease family.

The protein localises to the cytoplasm. Its function is as follows. Could be a nuclease involved in processing of the 5'-end of pre-16S rRNA. This chain is Putative pre-16S rRNA nuclease, found in Streptococcus agalactiae serotype Ia (strain ATCC 27591 / A909 / CDC SS700).